The primary structure comprises 509 residues: Probable malate:quinone oxidoreductase (509 aa).

Residues 490–509 are disordered; it reads LGLNEKEPVSGASEKELVYS. Positions 493-509 are enriched in basic and acidic residues; it reads NEKEPVSGASEKELVYS.

The protein belongs to the MQO family. Requires FAD as cofactor.

It carries out the reaction (S)-malate + a quinone = a quinol + oxaloacetate. It functions in the pathway carbohydrate metabolism; tricarboxylic acid cycle; oxaloacetate from (S)-malate (quinone route): step 1/1. The chain is Probable malate:quinone oxidoreductase from Geobacillus sp. (strain WCH70).